The following is a 7182-amino-acid chain: Replicase polyprotein 1ab (7182 aa).

A CoV Nsp1 globular domain is found at 25–151; sequence RTDHVSLKAS…EFQFLLRKKG (127 aa). Residues 159–195 form the BetaCoV Nsp1 C-terminal domain; the sequence is DAPWDYNWTPYSDLMDALEADPCGKYSQSLLKKLVGG. The CoV Nsp2 N-terminal domain occupies 197–473; the sequence is FTPIDQYMCG…WSKVCETANL (277 aa). 4 residues coordinate Zn(2+): Cys-340, Cys-343, Cys-359, and Cys-361. Residues 340–361 form a C4 region; the sequence is CTSCGKGSWLTGNAVQGFACDC. The 235-residue stretch at 479 to 713 folds into the CoV Nsp2 middle domain; sequence QHAINFVNEF…MHILSKAMQL (235 aa). The 137-residue stretch at 715–851 folds into the CoV Nsp2 C-terminal domain; the sequence is HTTVSWAGSK…VPTLFRLKGG (137 aa). The Ubiquitin-like 1 domain occupies 855–964; that stretch reads KGVKFGGEQT…MTFSVNPVEE (110 aa). 2 consecutive Macro domains span residues 1186–1345 and 1354–1480; these read PLKN…KVYN and TGLT…AVQT. The region spanning 1480 to 1553 is the DPUP domain; that stretch reads TPEQSFINTV…LEKCRTYLTS (74 aa). A Ubiquitin-like 2 domain is found at 1558 to 1613; sequence QKNVDVLVTIDGVNFRTVVLNNTTTYRVQLGSVFYKGSDISDTIPTEKMSGEAVYL. The Peptidase C16 domain maps to 1628 to 1902; it reads VYGTADTAFL…WADVDPDLSA (275 aa). Catalysis depends on Cys-1668, which acts as the For PL-PRO activity. Zn(2+)-binding residues include Cys-1748, Cys-1751, Cys-1783, and Cys-1785. The C4-type zinc finger occupies 1748 to 1785; the sequence is CNVCGVQDTTTTGLKACIYVGMNSLDELHATHEECCQC. Active-site for PL-PRO activity residues include His-1838 and Asp-1853. A Nucleic acid-binding domain is found at 1916 to 2033; the sequence is VIEYSPATIL…QVYDIAPVTL (118 aa). One can recognise a G2M domain in the interval 2059–2179; sequence PQSPVQVAED…ASVTVNVTTA (121 aa). 3 helical membrane-spanning segments follow: residues 2158–2178, 2196–2216, and 2268–2288; these read ILLG…NVTT, GIIG…FTFW, and LLFL…LFLF. The tract at residues 2158–2441 is HD1; it reads ILLGASSLFA…VTHIPLLGLV (284 aa). The 3Ecto domain maps to 2305 to 2371; sequence LATYRELRSY…FQMIQTHVTS (67 aa). Disulfide bonds link Cys-2321–Cys-2349 and Cys-2339–Cys-2346. A run of 3 helical transmembrane segments spans residues 2372 to 2392, 2396 to 2416, and 2421 to 2441; these read YVIN…YVLY, FNVL…GAFV, and YNYL…LGLV. Residues 2455–2545 are Y1; it reads RFYNHVINGC…SLRRLVKPTD (91 aa). Positions 2455–2828 constitute a CoV Nsp3 Y domain; the sequence is RFYNHVINGC…LSVKFSATKL (374 aa). Zn(2+) contacts are provided by His-2459, Cys-2464, Cys-2469, Cys-2472, Cys-2505, His-2508, Cys-2512, and Cys-2515. Residues 2459-2472 form a ZF1 region; sequence HVINGCKDTACLLC. Residues 2505–2515 are ZF2; that stretch reads CCRHNWNCVDC. The interval 2546–2644 is Y2; that stretch reads KSHYYVESVT…LVDSNMVTTV (99 aa). The interval 2546–2828 is coV-Y; it reads KSHYYVESVT…LSVKFSATKL (283 aa). The tract at residues 2645–2727 is Y3; sequence GDSREIASKM…DALQYAYKHD (83 aa). Residues 2728–2828 form a Y4 region; sequence LQLTTEGFNN…LSVKFSATKL (101 aa). Transmembrane regions (helical) follow at residues 2848–2868, 3119–3139, 3152–3172, and 3203–3223; these read CVVT…LPAF, STSL…FYYV, CAVV…FVVS, and WFVM…IVGV. Positions 2848-3223 are HD2; the sequence is CVVTLVVFAM…WMVFAYIVGV (376 aa). The region spanning 3242 to 3338 is the Nsp4C domain; sequence VFTDGKLNCS…NCSVTSSVLQ (97 aa). The Peptidase C30 domain maps to 3339–3644; the sequence is SGLVKMAAPS…NMQVMGVVMQ (306 aa). Catalysis depends on for 3CL-PRO activity residues His-3379 and Cys-3486. Transmembrane regions (helical) follow at residues 3650–3670, 3684–3704, 3709–3729, 3760–3777, 3782–3802, 3823–3843, and 3855–3875; these read ISYG…VATL, VIPL…MLTV, TFLT…NIVY, LGVY…VRRL, ASNL…YTTG, VTVF…FLYA, and LVLL…GVFS. Residues 3650-3875 are HD3; it reads ISYGLVHWLF…FCTVYFGVFS (226 aa). In terms of domain architecture, RdRp Nsp7 cofactor spans 3937–4019; it reads SKLTDLKCTS…DLLDHPSVLQ (83 aa). The region spanning 4020 to 4218 is the RdRp Nsp8 cofactor domain; it reads ATLSEFSHLA…RAASSAVTLQ (199 aa). The 110-residue stretch at 4219 to 4328 folds into the Nsp9 ssRNA-binding domain; it reads NNEIRPSGLK…GHIAATVRLQ (110 aa). Residues 4329–4467 form the ExoN/MTase coactivator domain; that stretch reads AGSNTEFAIN…DALRGTTIPQ (139 aa). Residues Cys-4402, Cys-4405, His-4411, Cys-4418, Cys-4444, Cys-4447, Cys-4455, and Cys-4457 each contribute to the Zn(2+) site. Zinc fingers lie at residues 4402 to 4418 and 4444 to 4457; these read CLYC…TGVC and CNVC…GCNC. The 258-residue stretch at 4473–4730 folds into the NiRAN domain; sequence FLNRVRGSIV…AAETHRDCDL (258 aa). Positions 4678 and 4687 each coordinate Mn(2+). Positions 4735-4833 constitute a Nsp12 Interface domain; sequence IEWPLLEYDY…MNMDVSLHRH (99 aa). Zn(2+) is bound by residues His-4764, Cys-4770, Cys-4775, Cys-4779, and Cys-4956. A Nsp12 RNA-dependent RNA polymerase domain is found at 4834 to 5401; that stretch reads RLSLKELMMY…DLYTAPTTLQ (568 aa). The rdRp Fingers N-ter stretch occupies residues 4836–5050; the sequence is SLKELMMYAA…HQKMLKSMAA (215 aa). A rdRp Palm N-ter region spans residues 5051–5089; it reads TRGSTCVIGTTKFYGGWDFMLKTLYKDVDNPHLMGWDYP. One can recognise a RdRp catalytic domain in the interval 5081-5243; that stretch reads PHLMGWDYPK…CYNSDYATKG (163 aa). The interval 5090–5148 is rdRp Fingers C-ter; sequence KCDRAMPNMCRIFASLILARKHSTCCTNTDRFYRLANECAQVLSEYVLCGGGYYVKPGG. Residues His-5111, Cys-5114, and Cys-5115 each contribute to the Zn(2+) site. The interval 5149–5284 is rdRp Palm C-ter; sequence TSSGDATTAY…KKGPHEFCSQ (136 aa). Active-site residues include Ser-5228, Asp-5229, and Asp-5230. The interval 5285–5401 is rdRp Thumb; it reads HTLFIKDGDD…DLYTAPTTLQ (117 aa). The CV ZBD domain occupies 5402–5514; it reads AVGSCVVCHS…TEFNRLATCD (113 aa). Zn(2+) is bound by residues Cys-5406, Cys-5409, Cys-5417, Cys-5420, Cys-5427, Cys-5430, His-5434, His-5440, Cys-5451, Cys-5456, Cys-5473, and His-5476. One can recognise a (+)RNA virus helicase ATP-binding domain in the interval 5658 to 5839; the sequence is TVPEEFANHV…MCNLGPDIFL (182 aa). Residue 5683-5690 coordinates ATP; the sequence is GPPGTGKS. The 175-residue stretch at 5840 to 6014 folds into the (+)RNA virus helicase C-terminal domain; that stretch reads SVCYRCPEEI…GLYKDCSRES (175 aa). In terms of domain architecture, ExoN spans 6071-6286; the sequence is LFITRDEAIR…RCLAIHDCFI (216 aa). Active-site residues include Asp-6089, Glu-6091, and Glu-6190. Residues Cys-6206, Cys-6209, Cys-6225, His-6228, His-6256, Cys-6260, and His-6263 each contribute to the Zn(2+) site. Residues His-6267 and Asp-6272 contribute to the active site. Cys-6278 contributes to the Zn(2+) binding site. The region spanning 6295 to 6523 is the N7-MTase domain; it reads YPYISHEKRL…NLWSTFTKIQ (229 aa). Residue 6330–6336 participates in S-adenosyl-L-methionine binding; it reads DIGNPKG. The segment at 6409–6423 is gpppA-binding; that stretch reads CDGGSLYVNKHAFHT. Zn(2+) contacts are provided by Cys-6447, Cys-6469, Cys-6480, and His-6483. In terms of domain architecture, Nsp15 N-terminal oligomerization spans 6524-6584; sequence GLENIAYNVI…NIAFELYAKR (61 aa). The AV-Nsp11N/CoV-Nsp15M domain maps to 6585 to 6715; the sequence is AVRSHPDFNL…IYKKVNNEFV (131 aa). The 140-residue stretch at 6732-6871 folds into the NendoU domain; sequence TPVSEMEKDF…KDGQVQTFYP (140 aa). Active-site residues include His-6762, His-6777, Lys-6817, Lys-6920, Asp-7004, Lys-7044, and Glu-7077. The Nidovirus-type SAM-dependent 2'-O-MTase domain occupies 6876 to 7170; it reads INDWKPGLAM…TLSVSTDVLV (295 aa).

Belongs to the coronaviruses polyprotein 1ab family. In terms of assembly, interacts with host PHB and PHB2. Interacts with papain-like protease nsp3 and non-structural protein 6. As to quaternary structure, monomer. Homodimer. Only the homodimer shows catalytic activity. In terms of assembly, interacts with nsp8 and nsp12 to form the replication-transcription complex (RTC): nsp12, nsp7, two subunits of nsp8, and up to two subunits of nsp13. Interacts with nsp7, nsp13 and nsp12 to form the replication-transcription complex (RTC): nsp12, nsp7, two subunits of nsp8, and up to two subunits of nsp13. As to quaternary structure, interacts with nsp12. In terms of assembly, interacts with proofreading exoribonuclease nsp14 and 2'-O-methyltransferase nsp16; these interactions enhance nsp14 and nsp16 enzymatic activities. Interacts with nsp7 and nsp8 to form the replication-transcription complex (RTC): nsp12, nsp7, two subunits of nsp8, and up to two subunits of nsp13. Interacts with nsp9. As to quaternary structure, interacts with nsp8 to form the replication-transcription complex (RTC): nsp12, nsp7, two subunits of nsp8, and up to two subunits of nsp13. Mn(2+) is required as a cofactor. It depends on Mg(2+) as a cofactor. Post-translationally, specific enzymatic cleavages in vivo by its own proteases yield mature proteins. 3CL-PRO and PL-PRO proteinases are autocatalytically processed.

It is found in the host membrane. The protein localises to the host cytoplasm. Its subcellular location is the host perinuclear region. It localises to the host endoplasmic reticulum-Golgi intermediate compartment. The catalysed reaction is RNA(n) + a ribonucleoside 5'-triphosphate = RNA(n+1) + diphosphate. It carries out the reaction ATP + H2O = ADP + phosphate + H(+). It catalyses the reaction Thiol-dependent hydrolysis of ester, thioester, amide, peptide and isopeptide bonds formed by the C-terminal Gly of ubiquitin (a 76-residue protein attached to proteins as an intracellular targeting signal).. The enzyme catalyses a 5'-end (N(7)-methyl 5'-triphosphoguanosine)-ribonucleoside in mRNA + S-adenosyl-L-methionine = a 5'-end (N(7)-methyl 5'-triphosphoguanosine)-(2'-O-methyl-ribonucleoside) in mRNA + S-adenosyl-L-homocysteine + H(+). The catalysed reaction is uridylyl-uridylyl-ribonucleotide-RNA = a 3'-end uridylyl-2',3'-cyclophospho-uridine-RNA + a 5'-end dephospho-ribonucleoside-RNA. It carries out the reaction a 5'-end diphospho-ribonucleoside in mRNA + GTP + H(+) = a 5'-end (5'-triphosphoguanosine)-ribonucleoside in mRNA + diphosphate. It catalyses the reaction a 5'-end (5'-triphosphoguanosine)-ribonucleoside in mRNA + S-adenosyl-L-methionine = a 5'-end (N(7)-methyl 5'-triphosphoguanosine)-ribonucleoside in mRNA + S-adenosyl-L-homocysteine. The replicase polyprotein of coronaviruses is a multifunctional protein: it contains the activities necessary for the transcription of negative stranded RNA, leader RNA, subgenomic mRNAs and progeny virion RNA as well as proteinases responsible for the cleavage of the polyprotein into functional products. In terms of biological role, inhibits host translation by interacting with the 40S ribosomal subunit. The nsp1-40S ribosome complex further induces an endonucleolytic cleavage near the 5'UTR of host mRNAs, targeting them for degradation. Viral mRNAs are not susceptible to nsp1-mediated endonucleolytic RNA cleavage thanks to the presence of a 5'-end leader sequence and are therefore protected from degradation. By suppressing host gene expression, nsp1 facilitates efficient viral gene expression in infected cells and evasion from host immune response. Functionally, may play a role in the modulation of host cell survival signaling pathway by interacting with host PHB and PHB2. Indeed, these two proteins play a role in maintaining the functional integrity of the mitochondria and protecting cells from various stresses. Its function is as follows. Responsible for the cleavages located at the N-terminus of the replicase polyprotein. In addition, PL-PRO possesses a deubiquitinating/deISGylating activity and processes both 'Lys-48'- and 'Lys-63'-linked polyubiquitin chains from cellular substrates. Participates together with nsp4 in the assembly of virally-induced cytoplasmic double-membrane vesicles necessary for viral replication. Antagonizes innate immune induction of type I interferon by blocking the phosphorylation, dimerization and subsequent nuclear translocation of host IRF3. Also prevents host NF-kappa-B signaling. Participates in the assembly of virally-induced cytoplasmic double-membrane vesicles necessary for viral replication. In terms of biological role, cleaves the C-terminus of replicase polyprotein at 11 sites. Recognizes substrates containing the core sequence [ILMVF]-Q-|-[SGACN]. Also able to bind an ADP-ribose-1''-phosphate (ADRP). Functionally, plays a role in the initial induction of autophagosomes from host endoplasmic reticulum. Later, limits the expansion of these phagosomes that are no longer able to deliver viral components to lysosomes. Its function is as follows. Forms a hexadecamer with nsp8 (8 subunits of each) that may participate in viral replication by acting as a primase. Alternatively, may synthesize substantially longer products than oligonucleotide primers. Forms a hexadecamer with nsp7 (8 subunits of each) that may participate in viral replication by acting as a primase. Alternatively, may synthesize substantially longer products than oligonucleotide primers. In terms of biological role, forms a primer, NSP9-pU, which is utilized by the polymerase for the initiation of RNA chains. Interacts with ribosome signal recognition particle RNA (SRP). Together with NSP8, suppress protein integration into the cell membrane, thereby disrupting host immune defenses. Functionally, plays a pivotal role in viral transcription by stimulating both nsp14 3'-5' exoribonuclease and nsp16 2'-O-methyltransferase activities. Therefore plays an essential role in viral mRNAs cap methylation. Its function is as follows. RNA-directed RNA polymerase that catalyzes the transcription of viral genomic and subgenomic RNAs. Acts in complex with nsp7 and nsp8 to transcribe both the minus and positive strands of genomic RNA. The kinase-like NiRAN domain of NSP12 attaches one or more nucleotides to the amino terminus of NSP9, forming a covalent RNA-protein intermediate that serves as transcription/replication primer. Subgenomic RNAs (sgRNAs) are formed by discontinuous transcription: The polymerase has the ability to pause at transcription-regulating sequences (TRS) and jump to the leader TRS, resulting in a major deletion. This creates a series of subgenomic RNAs that are replicated, transcribed and translated. In addition, Nsp12 is a subunit of the viral RNA capping enzyme that catalyzes the RNA guanylyltransferase reaction for genomic and sub-genomic RNAs. Subsequently, the NiRAN domain transfers RNA to GDP, and forms the core cap structure GpppA-RNA. Multi-functional protein with a zinc-binding domain in N-terminus displaying RNA and DNA duplex-unwinding activities with 5' to 3' polarity. Activity of helicase is dependent on magnesium. In terms of biological role, plays a role in viral RNA synthesis through two distinct activities. The N7-guanine methyltransferase activity plays a role in the formation of the cap structure GpppA-RNA. The proofreading exoribonuclease reduces the sensitivity of the virus to RNA mutagens during replication. This activity acts on both ssRNA and dsRNA in a 3'-5' direction. Functionally, plays a role in viral transcription/replication and prevents the simultaneous activation of host cell dsRNA sensors, such as MDA5/IFIH1, OAS, and PKR. Acts by degrading the 5'-polyuridines generated during replication of the poly(A) region of viral genomic and subgenomic RNAs. Catalyzes a two-step reaction in which a 2'3'-cyclic phosphate (2'3'-cP) is first generated by 2'-O transesterification, which is then hydrolyzed to a 3'-phosphate (3'-P). If not degraded, poly(U) RNA would hybridize with poly(A) RNA tails and activate host dsRNA sensors. Its function is as follows. Methyltransferase that mediates mRNA cap 2'-O-ribose methylation to the 5'-cap structure of viral mRNAs. N7-methyl guanosine cap is a prerequisite for binding of nsp16. Therefore plays an essential role in viral mRNAs cap methylation which is essential to evade immune system. The chain is Replicase polyprotein 1ab (rep) from Pipistrellus abramus (Japanese pipistrelle).